A 579-amino-acid chain; its full sequence is Peptidoglycan D,D-transpeptidase FtsI (579 aa).

Residues 15-35 (FCVIVGLLLAMVGAIVWRIVD) traverse the membrane as a helical segment. S294 functions as the Acyl-ester intermediate in the catalytic mechanism. Residues 558–579 (DNLPTATEQQQVNAAPAKGGRG) form a disordered region. The segment covering 561–570 (PTATEQQQVN) has biased composition (polar residues).

It belongs to the transpeptidase family. FtsI subfamily.

The protein resides in the cell inner membrane. It catalyses the reaction Preferential cleavage: (Ac)2-L-Lys-D-Ala-|-D-Ala. Also transpeptidation of peptidyl-alanyl moieties that are N-acyl substituents of D-alanine.. It participates in cell wall biogenesis; peptidoglycan biosynthesis. Its function is as follows. Catalyzes cross-linking of the peptidoglycan cell wall at the division septum. Binds penicillin. In Pseudomonas aeruginosa (strain ATCC 15692 / DSM 22644 / CIP 104116 / JCM 14847 / LMG 12228 / 1C / PRS 101 / PAO1), this protein is Peptidoglycan D,D-transpeptidase FtsI.